A 701-amino-acid polypeptide reads, in one-letter code: DNA ligase A (701 aa).

The disordered stretch occupies residues 1–23 (MSEKATGEVEAELPEHPDADERR). Residues 49-53 (DAEFD), 99-100 (SL), and Glu129 each bind NAD(+). The active-site N6-AMP-lysine intermediate is the Lys131. Residues Arg152, Glu192, Lys308, and Lys332 each coordinate NAD(+). Zn(2+) contacts are provided by Cys426, Cys429, Cys445, and Cys451. Residues 615–701 (SIERTLEGLS…EQGPPVEPAE (87 aa)) enclose the BRCT domain.

This sequence belongs to the NAD-dependent DNA ligase family. LigA subfamily. Requires Mg(2+) as cofactor. Mn(2+) is required as a cofactor.

The enzyme catalyses NAD(+) + (deoxyribonucleotide)n-3'-hydroxyl + 5'-phospho-(deoxyribonucleotide)m = (deoxyribonucleotide)n+m + AMP + beta-nicotinamide D-nucleotide.. DNA ligase that catalyzes the formation of phosphodiester linkages between 5'-phosphoryl and 3'-hydroxyl groups in double-stranded DNA using NAD as a coenzyme and as the energy source for the reaction. It is essential for DNA replication and repair of damaged DNA. Probably the only ligase required for non-homologous end joining (NHEJ) repair of 3-overhangs. In Mycolicibacterium smegmatis (strain ATCC 700084 / mc(2)155) (Mycobacterium smegmatis), this protein is DNA ligase A.